The primary structure comprises 308 residues: Acetylglutamate kinase (308 aa).

Residues 86-87 (GG), R108, and N201 contribute to the substrate site.

It belongs to the acetylglutamate kinase family. ArgB subfamily.

Its subcellular location is the cytoplasm. It carries out the reaction N-acetyl-L-glutamate + ATP = N-acetyl-L-glutamyl 5-phosphate + ADP. It participates in amino-acid biosynthesis; L-arginine biosynthesis; N(2)-acetyl-L-ornithine from L-glutamate: step 2/4. Catalyzes the ATP-dependent phosphorylation of N-acetyl-L-glutamate. The chain is Acetylglutamate kinase from Prochlorococcus marinus (strain MIT 9313).